Here is a 118-residue protein sequence, read N- to C-terminus: Iron-sulfur cluster insertion protein ErpA (118 aa).

Residues cysteine 46, cysteine 110, and cysteine 112 each contribute to the iron-sulfur cluster site.

This sequence belongs to the HesB/IscA family. Homodimer. It depends on iron-sulfur cluster as a cofactor.

In terms of biological role, required for insertion of 4Fe-4S clusters for at least IspG. The sequence is that of Iron-sulfur cluster insertion protein ErpA from Psychromonas ingrahamii (strain DSM 17664 / CCUG 51855 / 37).